The primary structure comprises 319 residues: Acetyl-coenzyme A carboxylase carboxyl transferase subunit alpha (319 aa).

Positions 38–293 (HALQDKLRLR…KAVLLNELDA (256 aa)) constitute a CoA carboxyltransferase C-terminal domain.

It belongs to the AccA family. Acetyl-CoA carboxylase is a heterohexamer composed of biotin carboxyl carrier protein (AccB), biotin carboxylase (AccC) and two subunits each of ACCase subunit alpha (AccA) and ACCase subunit beta (AccD).

The protein localises to the cytoplasm. The enzyme catalyses N(6)-carboxybiotinyl-L-lysyl-[protein] + acetyl-CoA = N(6)-biotinyl-L-lysyl-[protein] + malonyl-CoA. It functions in the pathway lipid metabolism; malonyl-CoA biosynthesis; malonyl-CoA from acetyl-CoA: step 1/1. Its function is as follows. Component of the acetyl coenzyme A carboxylase (ACC) complex. First, biotin carboxylase catalyzes the carboxylation of biotin on its carrier protein (BCCP) and then the CO(2) group is transferred by the carboxyltransferase to acetyl-CoA to form malonyl-CoA. The protein is Acetyl-coenzyme A carboxylase carboxyl transferase subunit alpha of Stenotrophomonas maltophilia (strain R551-3).